A 347-amino-acid chain; its full sequence is NADH-ubiquinone oxidoreductase chain 2 (347 aa).

11 helical membrane passes run Pro3–Ser23, His25–Met45, Tyr59–Ile79, Thr96–Pro116, Val122–Leu142, Val149–Gly169, Ile178–Pro198, Ser201–Phe221, Ile239–Gly259, Asp274–Met294, and Met326–Leu346.

Belongs to the complex I subunit 2 family. Core subunit of respiratory chain NADH dehydrogenase (Complex I) which is composed of 45 different subunits. Interacts with TMEM242.

It localises to the mitochondrion inner membrane. It catalyses the reaction a ubiquinone + NADH + 5 H(+)(in) = a ubiquinol + NAD(+) + 4 H(+)(out). Its function is as follows. Core subunit of the mitochondrial membrane respiratory chain NADH dehydrogenase (Complex I) which catalyzes electron transfer from NADH through the respiratory chain, using ubiquinone as an electron acceptor. Essential for the catalytic activity and assembly of complex I. This is NADH-ubiquinone oxidoreductase chain 2 from Sylvisorex johnstoni (Johnston's forest shrew).